A 149-amino-acid polypeptide reads, in one-letter code: Large ribosomal subunit protein uL11 (149 aa).

The protein belongs to the universal ribosomal protein uL11 family. As to quaternary structure, part of the ribosomal stalk of the 50S ribosomal subunit. Interacts with L10 and the large rRNA to form the base of the stalk. L10 forms an elongated spine to which L12 dimers bind in a sequential fashion forming a multimeric L10(L12)X complex. Post-translationally, one or more lysine residues are methylated.

In terms of biological role, forms part of the ribosomal stalk which helps the ribosome interact with GTP-bound translation factors. The protein is Large ribosomal subunit protein uL11 of Methylobacterium nodulans (strain LMG 21967 / CNCM I-2342 / ORS 2060).